Here is a 511-residue protein sequence, read N- to C-terminus: Ribonuclease E/G-like protein (511 aa).

One can recognise an S1 motif domain in the interval 35-117 (SDIYLGTVDK…LTANITLSGR (83 aa)). Residues D296 and D339 each coordinate Mg(2+).

It belongs to the RNase E/G family. Mg(2+) serves as cofactor.

The protein localises to the plastid. The protein resides in the chloroplast stroma. Its function is as follows. Involved in intercistronic processing of primary transcripts from chloroplast operons. The endonucleolytic activity of the enzyme depends on the number of phosphates at the 5' end, is inhibited by structured RNA, and preferentially cleaves A/U-rich sequences. In Porphyra purpurea (Red seaweed), this protein is Ribonuclease E/G-like protein (rne).